The following is a 347-amino-acid chain: Phenylalanine--tRNA ligase alpha subunit (347 aa).

E261 is a Mg(2+) binding site.

Belongs to the class-II aminoacyl-tRNA synthetase family. Phe-tRNA synthetase alpha subunit type 1 subfamily. As to quaternary structure, tetramer of two alpha and two beta subunits. Mg(2+) serves as cofactor.

It localises to the cytoplasm. It carries out the reaction tRNA(Phe) + L-phenylalanine + ATP = L-phenylalanyl-tRNA(Phe) + AMP + diphosphate + H(+). The protein is Phenylalanine--tRNA ligase alpha subunit of Streptococcus thermophilus (strain CNRZ 1066).